A 682-amino-acid polypeptide reads, in one-letter code: Potassium-transporting ATPase ATP-binding subunit (682 aa).

A run of 4 helical transmembrane segments spans residues 35-55, 62-82, 219-239, and 254-274; these read VMFIVWVGSLLTTLLAIAMAG, ATFTAAVSIWLWFTVLFANFA, IALTILLIALTLVFLLATATI, and VLVALLVCLIPTTIGGLLSAI. Asp-307 acts as the 4-aspartylphosphate intermediate in catalysis. ATP is bound by residues Asp-344, Glu-348, 377–384, and Lys-395; that span reads FTAQTRMS. 2 residues coordinate Mg(2+): Asp-518 and Asp-522. 3 helical membrane-spanning segments follow: residues 588-608, 616-636, and 656-676; these read FAIIPAAFAAVYPQLAMLNVM, AILSAVIFNALIIVFLIPLAL, and IYGLGGLLVPFIGIKAIDLLL.

It belongs to the cation transport ATPase (P-type) (TC 3.A.3) family. Type IA subfamily. As to quaternary structure, the system is composed of three essential subunits: KdpA, KdpB and KdpC.

The protein localises to the cell inner membrane. It catalyses the reaction K(+)(out) + ATP + H2O = K(+)(in) + ADP + phosphate + H(+). In terms of biological role, part of the high-affinity ATP-driven potassium transport (or Kdp) system, which catalyzes the hydrolysis of ATP coupled with the electrogenic transport of potassium into the cytoplasm. This subunit is responsible for energy coupling to the transport system and for the release of the potassium ions to the cytoplasm. The polypeptide is Potassium-transporting ATPase ATP-binding subunit (Klebsiella pneumoniae subsp. pneumoniae (strain ATCC 700721 / MGH 78578)).